Consider the following 527-residue polypeptide: Bifunctional purine biosynthesis protein PurH (527 aa).

One can recognise an MGS-like domain in the interval 1 to 149 (MASDFLPVRR…KNFARVAVAT (149 aa)).

Belongs to the PurH family.

The catalysed reaction is (6R)-10-formyltetrahydrofolate + 5-amino-1-(5-phospho-beta-D-ribosyl)imidazole-4-carboxamide = 5-formamido-1-(5-phospho-D-ribosyl)imidazole-4-carboxamide + (6S)-5,6,7,8-tetrahydrofolate. It catalyses the reaction IMP + H2O = 5-formamido-1-(5-phospho-D-ribosyl)imidazole-4-carboxamide. It functions in the pathway purine metabolism; IMP biosynthesis via de novo pathway; 5-formamido-1-(5-phospho-D-ribosyl)imidazole-4-carboxamide from 5-amino-1-(5-phospho-D-ribosyl)imidazole-4-carboxamide (10-formyl THF route): step 1/1. The protein operates within purine metabolism; IMP biosynthesis via de novo pathway; IMP from 5-formamido-1-(5-phospho-D-ribosyl)imidazole-4-carboxamide: step 1/1. This Xanthomonas euvesicatoria pv. vesicatoria (strain 85-10) (Xanthomonas campestris pv. vesicatoria) protein is Bifunctional purine biosynthesis protein PurH.